The following is a 295-amino-acid chain: Tyrosine transport system permease protein (295 aa).

8 consecutive transmembrane segments (helical) span residues Gly3–Ile23, Val57–Leu77, Phe81–Leu101, Ile122–Phe142, Ile173–Phe193, Asn200–Phe220, Ile232–Leu252, and Leu256–Ser276.

It belongs to the binding-protein-dependent transport system permease family. As to quaternary structure, the complex is probably composed of two ATP-binding proteins (CDR20291_0806), two transmembrane proteins (CDR20291_0807) and a solute-binding protein (CDR20291_0805).

Its subcellular location is the cell membrane. Probably part of an ABC transporter complex involved in tyrosine uptake. May also import phenylalanine. Probably responsible for the translocation of the substrate across the membrane. This Clostridioides difficile (strain R20291) (Peptoclostridium difficile) protein is Tyrosine transport system permease protein.